Consider the following 275-residue polypeptide: Myoblast determination protein 1 homolog 2 (275 aa).

In terms of domain architecture, bHLH spans 84–135 (DRRKAATMRERRRLGKVNDAFENLKRCTSNNPNQRLPKVEILRNAISYIESL). Positions 232–265 (SGQEGSEGSPCSPQEGSILSRNGGTVPSPTNCPQ) are enriched in polar residues. The disordered stretch occupies residues 232-275 (SGQEGSEGSPCSPQEGSILSRNGGTVPSPTNCPQPSHDPIYQVL).

In terms of assembly, efficient DNA binding requires dimerization with another bHLH protein.

It is found in the nucleus. In terms of biological role, may act as a transcriptional activator that promotes transcription of muscle-specific target genes and plays a role in muscle differentiation. The chain is Myoblast determination protein 1 homolog 2 (myod2) from Oncorhynchus mykiss (Rainbow trout).